Here is a 217-residue protein sequence, read N- to C-terminus: 3,4-dihydroxy-2-butanone 4-phosphate synthase (217 aa).

D-ribulose 5-phosphate-binding positions include 37–38 (RE), Asp-42, 150–154 (RGGHT), and Glu-174. Mg(2+) is bound at residue Glu-38. His-153 lines the Mg(2+) pocket.

It belongs to the DHBP synthase family. As to quaternary structure, homodimer. It depends on Mg(2+) as a cofactor. Mn(2+) is required as a cofactor.

It carries out the reaction D-ribulose 5-phosphate = (2S)-2-hydroxy-3-oxobutyl phosphate + formate + H(+). It participates in cofactor biosynthesis; riboflavin biosynthesis; 2-hydroxy-3-oxobutyl phosphate from D-ribulose 5-phosphate: step 1/1. In terms of biological role, catalyzes the conversion of D-ribulose 5-phosphate to formate and 3,4-dihydroxy-2-butanone 4-phosphate. The sequence is that of 3,4-dihydroxy-2-butanone 4-phosphate synthase from Pectobacterium carotovorum subsp. carotovorum (strain PC1).